We begin with the raw amino-acid sequence, 975 residues long: MTQQPQDDFDRSVEDAQAWMKAVQDQLQVNDNTQGPRAALEARLWETEKICQLEPEGRVRVDLVLRMAEALLACCPGDQKPGILARLKDIKAQWEETVTYMTHCHSRIEWVWLHWSEYLLARDEFYRWFQKMMVTLEPHIELQLGLKEKQWQLSHAQVLLHNVDNQAVLLDRLLEEAASLFNRIGDPSVDEDAQKRMKAEYDAVKAKAQKRVDLLEQVAREHEEYQAGVDEFQLWLKAVVEKVNGCLGRNCKLPITQRLSTLQDIAKDFPRGEESLETLEEQSAGVIRNTSPLGAEKITGELEEMRKVLEKLRALWEEEEERLRGLLRSRGAWEQQIKQLEAELSEFRMVLQRLAQEGLQPAAKAGTEDELVAHWRRYSATRAALASEEPRVDRLQAQLKELIVFPHNLKPLSDSVIATIQEYQSLKVKSARLRNAAAVELWQHFQRPLQDLQLWKALAQRLLEVTASLPDLPSLHTFLPQIEAALMESSRLKELLTMLQLKKDLLIGIFGQERATALLEQVAGSMRDRDLLHNSLLQRKSKLQSLLAQHKDFGAAFEPLQRKLLDLQVRVQAEKGLQRDLPGKQAQLSRLQGLQEEGLDLGAQMEAARPLVQENPNHQHKMDQLSSDFQALQRSLEDLVDRCRQSVQEHCTFSHQLLELRQWIVVTTQKLEAHRGEAGPGDAESQEAEFERLVAEFPEKEAQLSLVEAQGWLVMEKSSPEGAAVVQEELRELAESWRALRLLEESLLSLIRNWHLQRMEVDSGKKMVFTNNIPKSGFLINPMDPIPRHRRRANLLQEEEGSHEDFSQLLRNFGQWLQVENSKLVRIIAMRTSTAEDLRTRKSKLQELEARVPEGQHLFENLLRLGPARGTSDELEDLRYQWMLYKSKLKDSGHLLTQSSPGEPTGFQKTRRWRGLGSLFRRACCVALPLQLLLLLFLLLLFLLPIREEDRSCTLANNFARSFTLMLRYNGPPPT.

At 1–925 (MTQQPQDDFD…LGSLFRRACC (925 aa)) the chain is on the cytoplasmic side. One copy of the Spectrin 1 repeat lies at 220 to 325 (REHEEYQAGV…WEEEEERLRG (106 aa)). Positions 617–645 (NHQHKMDQLSSDFQALQRSLEDLVDRCRQ) form a coiled coil. One copy of the Spectrin 2 repeat lies at 647–740 (VQEHCTFSHQ…RELAESWRAL (94 aa)). The region spanning 917–975 (GSLFRRACCVALPLQLLLLLFLLLLFLLPIREEDRSCTLANNFARSFTLMLRYNGPPPT) is the KASH domain. The chain crosses the membrane as a helical; Anchor for type IV membrane protein span at residues 926–946 (VALPLQLLLLLFLLLLFLLPI). At 947–975 (REEDRSCTLANNFARSFTLMLRYNGPPPT) the chain is on the perinuclear space side.

The protein belongs to the nesprin family. In terms of assembly, core component of LINC complexes which are composed of inner nuclear membrane SUN domain-containing proteins coupled to outer nuclear membrane KASH domain-containing nesprins. SUN and KASH domain-containing proteins seem to bind each other promiscuously; however, differentially expression of LINC complex constituents can give rise to specific assemblies. Interacts with SUN1 and SUN2; probably forming respective LINC complexes. Interacts with PLEC (via actin-binding domain). Interacts with DST. Interacts with SYNE1 via spectrin repeats. Interacts (via KASH domain) with TOR1A (ATP-bound); the interaction is required for SYNE3 nuclear envelope localization. The disulfid bond with SUN1 or SUN2 is required for stability of the respective LINC complex under tensile forces. Expressed in aortic endothelial cells (at protein level).

Its subcellular location is the nucleus outer membrane. It is found in the nucleus envelope. The protein resides in the rough endoplasmic reticulum. Its function is as follows. As a component of the LINC (LInker of Nucleoskeleton and Cytoskeleton) complex involved in the connection between the nuclear lamina and the cytoskeleton. The nucleocytoplasmic interactions established by the LINC complex play an important role in the transmission of mechanical forces across the nuclear envelope and in nuclear movement and positioning. Probable anchoring protein which tethers the nucleus to the cytoskeleton by binding PLEC which can associate with the intermediate filament system. Plays a role in the regulation of aortic epithelial cell morphology, and is required for flow-induced centrosome polarization and directional migration in aortic endothelial cells. In Homo sapiens (Human), this protein is Nesprin-3.